The following is a 373-amino-acid chain: Spore germination protein KB (373 aa).

Transmembrane regions (helical) follow at residues 11 to 31 (LFVMIIIFELGSSLLITPGSM), 37 to 57 (WIAVLLGCAIGLFLFYLYQGI), 78 to 98 (LSWLFSFLYILYFAYIAARVL), 105 to 125 (LLTFAYHDTPIIIVNALLMVV), 143 to 163 (LLFGAMYLLGAIGLVLIIVSG), 185 to 205 (VFTQTMYVPFGEVVLFVMIFP), 219 to 239 (IAMAISGLIVALTVAINISVL), 269 to 289 (VFFMLALIIGGFFKVSLYLYA), 306 to 326 (LAYPMGLGILILSITIATNFS), and 338 to 358 (LYIHLPFQLLFPLFLFIVAVW).

This sequence belongs to the amino acid-polyamine-organocation (APC) superfamily. Spore germination protein (SGP) (TC 2.A.3.9) family.

It localises to the cell membrane. Functionally, involved in the germination response to the combination of glucose, fructose, L-asparagine, and KCl. This is Spore germination protein KB (gerKB) from Bacillus subtilis (strain 168).